Consider the following 521-residue polypeptide: Riboflavin transporter MCH5 (521 aa).

Disordered stretches follow at residues 1–33 and 65–96; these read MSSD…SIHY and NKGT…NEEI. The Cytoplasmic portion of the chain corresponds to 1 to 103; that stretch reads MSSDSLTPKD…EEIESFPEGG (103 aa). A helical transmembrane segment spans residues 104 to 124; that stretch reads FKAWVVTFGCFLGLIACFGLL. Asparagine 125 carries N-linked (GlcNAc...) asparagine glycosylation. The Extracellular segment spans residues 125–143; that stretch reads NSTGVIESHLQDNQLSSES. The helical transmembrane segment at 144–164 threads the bilayer; it reads VSTIGWLFSLFLFVCSASCII. At 165–172 the chain is on the cytoplasmic side; sequence SGTYFDRN. Residues 173–193 form a helical membrane-spanning segment; sequence GFRTIMIVGTVFHVAGLFATA. Asparagine 194 carries N-linked (GlcNAc...) asparagine glycosylation. At 194-200 the chain is on the extracellular side; that stretch reads NSTKYWH. A helical membrane pass occupies residues 201-221; it reads FILSFAIVCGFGNGIVLSPLV. Residues 222 to 233 are Cytoplasmic-facing; that stretch reads SVPAHYFFKRRG. Residues 234–254 traverse the membrane as a helical segment; sequence TALAMATIGGSVGGVVFPIML. Residues 255 to 269 lie on the Extracellular side of the membrane; that stretch reads RSFFSMKSDTDPTYG. Residues 270–290 form a helical membrane-spanning segment; it reads FVWGIRTLGFLDLALLTLSII. Residues 291–325 are Cytoplasmic-facing; it reads LVKERLPHVIENSKDGESRWRYILRVYILQCFDAK. Residues 326-346 traverse the membrane as a helical segment; the sequence is AFLDMKYLFCVLGTVFSELSI. Residues 347–367 are Extracellular-facing; that stretch reads NSALTYYGSYATSHGISANDA. Residues 368–388 form a helical membrane-spanning segment; the sequence is YTLIMIINVCGIPGRWVPGYL. The Cytoplasmic segment spans residues 389–396; that stretch reads SDKFGRFN. The helical transmembrane segment at 397 to 417 threads the bilayer; sequence VAIATLLTLFIVMFVGWLPFG. Residues 418-422 are Extracellular-facing; it reads TNLTN. N-linked (GlcNAc...) asparagine glycosylation occurs at asparagine 419. Residues 423-443 traverse the membrane as a helical segment; it reads MYVISALYGFCSGSVFSLLPV. The Cytoplasmic segment spans residues 444-461; sequence CCGQISKTEEFGKRYSTM. A helical membrane pass occupies residues 462 to 482; sequence YFVVGFGTLVGIPITGAIISI. Residues 483 to 487 are Extracellular-facing; it reads KTTAD. The helical transmembrane segment at 488-508 threads the bilayer; it reads YQHYIIFCGLATFVSAVCYII. Topologically, residues 509 to 521 are cytoplasmic; the sequence is SRAYCVGFKWVRF.

Belongs to the major facilitator superfamily. Monocarboxylate porter (TC 2.A.1.13) family.

The protein localises to the cell membrane. Its function is as follows. Riboflavin transporter involved in riboflavin (vitamin B2) uptake. Does not act in the transport of monocarboxylic acids across the plasma membrane. The chain is Riboflavin transporter MCH5 (MCH5) from Saccharomyces cerevisiae (strain ATCC 204508 / S288c) (Baker's yeast).